Consider the following 313-residue polypeptide: Small ribosomal subunit biogenesis GTPase RsgA (313 aa).

A CP-type G domain is found at 80 to 237 (KVALRQVIVS…LIDTPGIKEF (158 aa)). Residues 129–132 (NKVD) and 180–188 (GQSGVGKSS) each bind GTP. Zn(2+) is bound by residues C261, C266, H268, and C274.

The protein belongs to the TRAFAC class YlqF/YawG GTPase family. RsgA subfamily. Monomer. Associates with 30S ribosomal subunit, binds 16S rRNA. Zn(2+) is required as a cofactor.

The protein localises to the cytoplasm. Functionally, one of several proteins that assist in the late maturation steps of the functional core of the 30S ribosomal subunit. Helps release RbfA from mature subunits. May play a role in the assembly of ribosomal proteins into the subunit. Circularly permuted GTPase that catalyzes slow GTP hydrolysis, GTPase activity is stimulated by the 30S ribosomal subunit. The sequence is that of Small ribosomal subunit biogenesis GTPase RsgA from Borrelia recurrentis (strain A1).